We begin with the raw amino-acid sequence, 405 residues long: Coiled-coil domain-containing protein 91 (405 aa).

Residues 1 to 16 form a GGA1-binding motif region; the sequence is MDDDDFGGFEAAETFD. A disordered region spans residues 1-27; sequence MDDDDFGGFEAAETFDGGNGETQTTSP. Phosphoserine occurs at positions 43 and 46. Positions 126-376 form a coiled coil; the sequence is GANVSNIQLR…QKRLDQVIRQ (251 aa). Residues 210-377 are homodimerization; the sequence is LSIIVDEYKH…KRLDQVIRQR (168 aa).

As to quaternary structure, homodimer. Interacts with GGA1, GGA2 and AP1G1.

It localises to the membrane. Its subcellular location is the golgi apparatus. The protein resides in the trans-Golgi network membrane. The protein localises to the trans-Golgi network. Involved in the regulation of membrane traffic through the trans-Golgi network (TGN). Functions in close cooperation with the GGAs in the sorting of hydrolases to lysosomes. This is Coiled-coil domain-containing protein 91 (CCDC91) from Pongo abelii (Sumatran orangutan).